The sequence spans 583 residues: Aspartate--tRNA ligase (583 aa).

Position 174 (glutamate 174) interacts with L-aspartate. Residues 198–201 (QITK) are aspartate. Arginine 220 lines the L-aspartate pocket. Residues 220 to 222 (RDE) and glutamine 229 each bind ATP. Position 443 (histidine 443) interacts with L-aspartate. Glutamate 477 is a binding site for ATP. Position 484 (arginine 484) interacts with L-aspartate. 529–532 (GLDR) contacts ATP.

Belongs to the class-II aminoacyl-tRNA synthetase family. Type 1 subfamily. As to quaternary structure, homodimer.

The protein resides in the cytoplasm. It carries out the reaction tRNA(Asp) + L-aspartate + ATP = L-aspartyl-tRNA(Asp) + AMP + diphosphate. In terms of biological role, catalyzes the attachment of L-aspartate to tRNA(Asp) in a two-step reaction: L-aspartate is first activated by ATP to form Asp-AMP and then transferred to the acceptor end of tRNA(Asp). The polypeptide is Aspartate--tRNA ligase (Streptococcus thermophilus (strain CNRZ 1066)).